The sequence spans 358 residues: Probable D-xylulose reductase A (358 aa).

3 residues coordinate Zn(2+): cysteine 47, histidine 72, and glutamate 73. 182–187 is an NAD(+) binding site; it reads GAGPVG.

It belongs to the zinc-containing alcohol dehydrogenase family. Requires Zn(2+) as cofactor.

The catalysed reaction is xylitol + NAD(+) = D-xylulose + NADH + H(+). It functions in the pathway carbohydrate degradation; L-arabinose degradation via L-arabinitol; D-xylulose 5-phosphate from L-arabinose (fungal route): step 4/5. In terms of biological role, xylitol dehydrogenase which catalyzes the conversion of xylitol to D-xylulose. Xylose is a major component of hemicelluloses such as xylan. Most fungi utilize D-xylose via three enzymatic reactions, xylose reductase (XR), xylitol dehydrogenase (XDH), and xylulokinase, to form xylulose 5-phosphate, which enters pentose phosphate pathway. The polypeptide is Probable D-xylulose reductase A (xdhA) (Aspergillus clavatus (strain ATCC 1007 / CBS 513.65 / DSM 816 / NCTC 3887 / NRRL 1 / QM 1276 / 107)).